The primary structure comprises 758 residues: Solute carrier family 26 member 6 (758 aa).

Topologically, residues 1–117 (MGLPDGSDQG…PQGLAYALLA (117 aa)) are cytoplasmic. A helical transmembrane segment spans residues 118-138 (GLPPMFGLYSSFYPVFIYFLF). The Extracellular portion of the chain corresponds to 139-187 (GTSRHISVGTFAVMSVMVGSVTESLTADKAFVQGLNATADDARVQVAYT). N-linked (GlcNAc) asparagine glycosylation occurs at N174. The chain crosses the membrane as a helical span at residues 188–208 (LSFLVGLFQVGLGLVHFGFVV). The Cytoplasmic portion of the chain corresponds to 209 to 263 (TYLSEPLVRSYTTAASVQVLVSQLKYVFGIKLSSHSGPLSVIYTVLEVCAQLPET). Residues 264–284 (VPGTVVTAIVAGVALVLVKLL) traverse the membrane as a helical segment. Residues 285 to 292 (NEKLHRRL) are Extracellular-facing. The chain crosses the membrane as a helical span at residues 293–313 (PLPIPGELLTLIGATGISYGV). The Cytoplasmic segment spans residues 314–340 (KLNDRFKVDVVGNITTGLIPPVAPKTE). Residues 341 to 361 (LFATLVGNAFAIAVVGFAIAI) form a helical membrane-spanning segment. At 362–380 (SLGKIFALRHGYRVDSNQE) the chain is on the extracellular side. A helical transmembrane segment spans residues 381–401 (LVALGLSNLIGGFFQCFPVSC). Residues 402 to 417 (SMSRSLVQESTGGNTQ) are Cytoplasmic-facing. Residues 418–438 (VAGAVSSLFILLIIVKLGELF) form a helical membrane-spanning segment. Over 439-485 (RDLPKAVLAAVIIVNLKGMMKQFSDICSLWKANRVDLLIWLVTFVAT) the chain is Extracellular. The chain crosses the membrane as a helical span at residues 486 to 506 (ILLNLDIGLAVSIVFSLLLVV). At 507-758 (VRMQLPHYSV…PKSPVLATKL (252 aa)) the chain is on the cytoplasmic side. In terms of domain architecture, STAS spans 531-741 (EYSGAKEVPG…ASVHDAVTFA (211 aa)). Residues 585-608 (EMKLKRMKKAKKSQKQDASSKISS) form a disordered region. Phosphoserine is present on S751.

Interacts (via C-terminal domain) with PDZK1 (via C-terminal PDZ domain); the interaction induces chloride and oxalate exchange transport. Interacts with CFTR, SLC26A3 and NHERF1. Interacts with AHCYL1; the interaction increases SLC26A6 activity. In terms of processing, N-glycosylated. Glycosylation at Asn-174 positively regulates its chloride oxalate exchanger activity. In terms of tissue distribution, expressed in kidney (at protein level). Expressed in spermatogenic cells. Expressed in intestine, kidney, testis, brain, muscle, heart, and stomach. Expressed in the submandibular and sublingual salivary glands. As to expression, highly expressed in stomach, kidney, heart and small intestine, low in the lung, liver, testis, brain, skeletal muscle and colon. Expressed in the heart.

The protein localises to the cell membrane. The protein resides in the apical cell membrane. It is found in the cytoplasmic vesicle membrane. Its subcellular location is the microsome. The catalysed reaction is 2 hydrogencarbonate(in) + chloride(out) = 2 hydrogencarbonate(out) + chloride(in). The enzyme catalyses oxalate(in) + chloride(out) = oxalate(out) + chloride(in). It carries out the reaction oxalate(in) + formate(out) = oxalate(out) + formate(in). It catalyses the reaction oxalate(in) + sulfate(out) = oxalate(out) + sulfate(in). The catalysed reaction is formate(in) + chloride(out) = formate(out) + chloride(in). The enzyme catalyses sulfate(in) = sulfate(out). With respect to regulation, apical membrane chloride-bicarbonate exchange activity of the pancreatic duct is inhibited by 4,4'-diisothiocyanatostilbene-2,2'-disulfonic acid (DIDS). Oxalate secretion in the duodenum and chloride-formate exchange activity is inhibited by DIDS. Its activity is regulated as follows. Chloride-formate exchange activity and transcellular sulfate absorption is inhibited by 4,4'-diisothiocyanatostilbene-2,2'-disulfonic acid (DIDS). Its function is as follows. Apical membrane anion-exchanger with wide epithelial distribution that plays a role as a component of the pH buffering system for maintaining acid-base homeostasis. Acts as a versatile DIDS-sensitive inorganic and organic anion transporter that mediates the uptake of monovalent anions like chloride, bicarbonate, formate and hydroxyl ion and divalent anions like sulfate and oxalate. Functions in multiple exchange modes involving pairs of these anions, which include chloride-bicarbonate, chloride-oxalate, oxalate-formate, oxalate-sulfate and chloride-formate exchange. Apical membrane chloride-bicarbonate exchanger that mediates luminal chloride absorption and bicarbonate secretion by the small intestinal brush border membrane and contributes to intracellular pH regulation in the duodenal upper villous epithelium during proton-coupled peptide absorption, possibly by providing a bicarbonate import pathway. Its association with carbonic anhydrase CA2 forms a bicarbonate transport metabolon; hence maximizes the local concentration of bicarbonate at the transporter site. Also mediates intestinal chloride absorption and oxalate secretion, thereby preventing hyperoxaluria and calcium oxalate urolithiasis. Transepithelial oxalate secretion, chloride-formate, chloride-oxalate and chloride-bicarbonate transport activities in the duodenum are inhibited by PKC activation in a calcium-independent manner. The apical membrane chloride-bicarbonate exchanger also provides a major route for fluid and bicarbonate secretion into the proximal tubules of the kidney as well as into the proximal part of the interlobular pancreatic ductal tree, where it mediates electrogenic chloride-bicarbonate exchange with a chloride-bicarbonate stoichiometry of 1:2, and hence will dilute and alkalinize protein-rich acinar secretion. Also mediates the transcellular sulfate absorption and oxalate secretion across the apical membrane in the duodenum and the formate ion efflux at the apical brush border of cells in the proximal tubules of kidney. Plays a role in sperm capacitation by increasing intracellular pH. Functionally, mediates electrogenic chloride-bicarbonate exchange with a chloride-bicarbonate stoichiometry of 1:2. Also mediates exchange of chloride-formate and chloride-oxalate ions. Mediates transcellular sulfate absorption. The chain is Solute carrier family 26 member 6 from Mus musculus (Mouse).